The primary structure comprises 125 residues: Small ribosomal subunit protein uS13 (125 aa).

The disordered stretch occupies residues 90–125; the sequence is QRHRKGLPVRGQRTKTNARTRKGPKRTVAGKKKATK.

The protein belongs to the universal ribosomal protein uS13 family. As to quaternary structure, part of the 30S ribosomal subunit. Forms a loose heterodimer with protein S19. Forms two bridges to the 50S subunit in the 70S ribosome.

Its function is as follows. Located at the top of the head of the 30S subunit, it contacts several helices of the 16S rRNA. In the 70S ribosome it contacts the 23S rRNA (bridge B1a) and protein L5 of the 50S subunit (bridge B1b), connecting the 2 subunits; these bridges are implicated in subunit movement. Contacts the tRNAs in the A and P-sites. The chain is Small ribosomal subunit protein uS13 from Bifidobacterium adolescentis (strain ATCC 15703 / DSM 20083 / NCTC 11814 / E194a).